An 833-amino-acid chain; its full sequence is Urease (833 aa).

Residues 395–833 (GALDVHVHYI…LPLTKRYFVY (439 aa)) enclose the Urease domain. Histidine 400 and histidine 402 together coordinate Ni(2+). Positions 402 and 433 each coordinate urea. Lysine 483 serves as a coordination point for Ni(2+). Position 483 is an N6-carboxylysine (lysine 483). Positions 485 and 512 each coordinate urea. Histidine 512 and histidine 538 together coordinate Ni(2+). Histidine 586 serves as the catalytic Proton donor. Aspartate 626 serves as a coordination point for Ni(2+). Alanine 629 contacts urea.

This sequence in the C-terminal section; belongs to the metallo-dependent hydrolases superfamily. Urease alpha subunit family. As to quaternary structure, homohexamer. It depends on Ni(2+) as a cofactor. In terms of processing, carboxylation allows a single lysine to coordinate two nickel ions.

It catalyses the reaction urea + 2 H2O + H(+) = hydrogencarbonate + 2 NH4(+). Its pathway is nitrogen metabolism; urea degradation; CO(2) and NH(3) from urea (urease route): step 1/1. The urease accessory proteins URE4, URE6 and URE7 are required for urease activity, URE7 supplying nickel for the functional urease. Its function is as follows. Plays a nutritional role via nitrogen acquisition in the environment. Contributes to the central nervous system invasion by enhancing yeast sequestration within microcapillary beds (such as within the brain) during hematogenous spread, thereby facilitating blood-to-brain invasion by C.neoformans. Affects fitness within the mammalian phagosome, promoting non-lytic exocytosis while delaying intracellular replication and thus reducing phagolysosomal membrane damage, events that could facilitate cryptococcal dissemination when transported inside macrophages. Urease activity is also associated with the regulation of key intracellular metabolic pathways, including melanin biosynthesis, polyamine biosynthesis, as well as intracellular levels of proline and reactive oxygen species. The polypeptide is Urease (Cryptococcus neoformans var. neoformans serotype D (strain B-3501A) (Filobasidiella neoformans)).